We begin with the raw amino-acid sequence, 439 residues long: Protein disulfide-isomerase A6 (439 aa).

The signal sequence occupies residues 1–19 (MARLGFGLVSCTFFLAASG). 2 Thioredoxin domains span residues 20–133 (LYSS…ALRQ) and 151–287 (QGRG…EDVA). Catalysis depends on nucleophile residues cysteine 55 and cysteine 58. An intrachain disulfide couples cysteine 55 to cysteine 58. Phosphoserine occurs at positions 129, 156, and 158. A disordered region spans residues 141-160 (GRSGGYSSGKQGRGDSSSKK). Active-site nucleophile residues include cysteine 190 and cysteine 193. Cysteines 190 and 193 form a disulfide. Residues 400–425 (GSFPAITAREPWDGRDGELPVEDDID) form a disordered region. Residue serine 427 is modified to Phosphoserine. The short motif at 436-439 (KDEL) is the Prevents secretion from ER element.

Belongs to the protein disulfide isomerase family. In terms of assembly, part of a large chaperone multiprotein complex comprising DNAJB11, HSP90B1, HSPA5, HYOU, PDIA2, PDIA4, PDIA6, PPIB, SDF2L1, UGGT1 and very small amounts of ERP29, but not, or at very low levels, CALR nor CANX. Interacts with MICA on the surface of tumor cells, leading to MICA disulfide bond reduction which is required for its release from tumor cells. Interacts with ITGB3 following platelet stimulation. Interacts with ERN1; the interaction is direct. Interacts with EIF2AK3. As to expression, expressed most abundantly in lung and kidney, followed by heart, liver and brain.

It is found in the endoplasmic reticulum lumen. Its subcellular location is the cell membrane. The protein localises to the melanosome. It catalyses the reaction Catalyzes the rearrangement of -S-S- bonds in proteins.. Its function is as follows. May function as a chaperone that inhibits aggregation of misfolded proteins. Negatively regulates the unfolded protein response (UPR) through binding to UPR sensors such as ERN1, which in turn inactivates ERN1 signaling. May also regulate the UPR via the EIF2AK3 UPR sensor. Plays a role in platelet aggregation and activation by agonists such as convulxin, collagen and thrombin. This chain is Protein disulfide-isomerase A6 (PDIA6), found in Mesocricetus auratus (Golden hamster).